Here is a 58-residue protein sequence, read N- to C-terminus: Large ribosomal subunit protein bL32 (58 aa).

This sequence belongs to the bacterial ribosomal protein bL32 family.

In Caldicellulosiruptor bescii (strain ATCC BAA-1888 / DSM 6725 / KCTC 15123 / Z-1320) (Anaerocellum thermophilum), this protein is Large ribosomal subunit protein bL32.